A 65-amino-acid chain; its full sequence is Metallothionein-like protein type 3 (65 aa).

The protein belongs to the metallothionein superfamily. Type 15 family.

In terms of biological role, metallothioneins have a high content of cysteine residues that bind various heavy metals. This chain is Metallothionein-like protein type 3, found in Musa acuminata (Banana).